The primary structure comprises 547 residues: Chaperonin GroEL (547 aa).

Residues 30-33, Lys-51, 87-91, Gly-415, and Asp-496 contribute to the ATP site; these read TLGP and DGTTT.

This sequence belongs to the chaperonin (HSP60) family. As to quaternary structure, forms a cylinder of 14 subunits composed of two heptameric rings stacked back-to-back. Interacts with the co-chaperonin GroES.

Its subcellular location is the cytoplasm. It carries out the reaction ATP + H2O + a folded polypeptide = ADP + phosphate + an unfolded polypeptide.. Functionally, together with its co-chaperonin GroES, plays an essential role in assisting protein folding. The GroEL-GroES system forms a nano-cage that allows encapsulation of the non-native substrate proteins and provides a physical environment optimized to promote and accelerate protein folding. The sequence is that of Chaperonin GroEL from Mannheimia succiniciproducens (strain KCTC 0769BP / MBEL55E).